Consider the following 213-residue polypeptide: Na(+)-translocating NADH-quinone reductase subunit D (213 aa).

Transmembrane regions (helical) follow at residues 22 to 42 (LIAI…TTAL), 43 to 63 (TMGF…SLLR), 77 to 97 (IIIS…FFTI), 101 to 121 (LSVF…AESM), 131 to 151 (FLDG…ISII), and 183 to 203 (LGLM…IWIV).

This sequence belongs to the NqrDE/RnfAE family. Composed of six subunits; NqrA, NqrB, NqrC, NqrD, NqrE and NqrF.

It is found in the cell inner membrane. It catalyses the reaction a ubiquinone + n Na(+)(in) + NADH + H(+) = a ubiquinol + n Na(+)(out) + NAD(+). NQR complex catalyzes the reduction of ubiquinone-1 to ubiquinol by two successive reactions, coupled with the transport of Na(+) ions from the cytoplasm to the periplasm. NqrA to NqrE are probably involved in the second step, the conversion of ubisemiquinone to ubiquinol. This chain is Na(+)-translocating NADH-quinone reductase subunit D, found in Chlamydia trachomatis serovar L2 (strain ATCC VR-902B / DSM 19102 / 434/Bu).